An 816-amino-acid polypeptide reads, in one-letter code: Ribonucleoside-diphosphate reductase large subunit (816 aa).

One can recognise an ATP-cone domain in the interval 1-92; sequence MYVVKRDGRQ…VSNLHKNTKK (92 aa). ATP-binding positions include 5 to 6, 11 to 17, Thr53, and Asp57; these read KR and ETVHFDK. Positions 202 and 217 each coordinate GDP. A disulfide bridge links Cys218 with Cys444. DTTP-binding positions include 226 to 228, Lys243, Arg256, and 263 to 264; these read DSI and RG. Residue Asn427 participates in GDP binding. Asn427 serves as the catalytic Proton acceptor. Cys429 acts as the Cysteine radical intermediate in catalysis. GDP contacts are provided by residues Glu431 and 623-626; that span reads TAST. Residue Glu431 is the Proton acceptor of the active site.

It belongs to the ribonucleoside diphosphate reductase large chain family. In terms of assembly, heterotetramer of two large/R1 and two small/R2 subunits. A radical transfer pathway may occur between 'Tyr-125' of protein R2 and R1. In terms of processing, contains a disulfide bonds. Binding of the substrate occurs primarily when the active-site cysteines are reduced. Highly expressed in actively growing tissues such as young leaves, shoot apices, inflorescences and carpels. Very low expression in cotyledons, adult and cauline leaves and senescent leaves.

Its subcellular location is the cytoplasm. It catalyses the reaction a 2'-deoxyribonucleoside 5'-diphosphate + [thioredoxin]-disulfide + H2O = a ribonucleoside 5'-diphosphate + [thioredoxin]-dithiol. With respect to regulation, under complex allosteric control mediated by deoxynucleoside triphosphates and ATP binding to separate specificity and activation sites on the large subunit. The type of nucleotide bound at the specificity site determines substrate preference. It seems probable that ATP makes the enzyme reduce CDP and UDP, dGTP favors ADP reduction and dTTP favors GDP reduction. Stimulated by ATP and inhibited by dATP binding to the activity site. In terms of biological role, provides the precursors necessary for DNA synthesis. Catalyzes the biosynthesis of deoxyribonucleotides from the corresponding ribonucleotides. R1 contains the binding sites for both substrates and allosteric effectors and carries out the actual reduction of the ribonucleotide. Ribonucleotide reductase (RNR) complex function is essential for efficient organellar DNA degradation in pollen. Involved in chloroplast division. This Arabidopsis thaliana (Mouse-ear cress) protein is Ribonucleoside-diphosphate reductase large subunit.